Here is a 274-residue protein sequence, read N- to C-terminus: Copper chaperone for superoxide dismutase (274 aa).

An HMA domain is found at 11-74 (ACMLEFAVQM…LLEDTGRQAV (64 aa)). The Cu cation site is built by Cys22 and Cys25. Residue Lys76 forms a Glycyl lysine isopeptide (Lys-Gly) (interchain with G-Cter in ubiquitin) linkage. Positions 88–234 (AAVAILGGSG…LACGIIARSA (147 aa)) are superoxide dismutase-like. A disulfide bridge links Cys141 with Cys227. Zn(2+)-binding residues include His147, His155, His164, and Asp167. Glycyl lysine isopeptide (Lys-Gly) (interchain with G-Cter in ubiquitin) cross-links involve residues Lys189, Lys216, and Lys241. 2 residues coordinate Cu cation: Cys244 and Cys246.

The protein in the C-terminal section; belongs to the Cu-Zn superoxide dismutase family. Homodimer, and heterodimer with SOD1. Interacts with COMMD1. Interacts with XIAP/BIRC4. Interacts with SLC31A1(via C-terminal domain); this interaction is Cu(1+)-mediated. The heterodimer CCS:SOD1 interacts with SLC31A1; this heterotrimer is Cu(1+)-mediated and its maintenance is regulated through SOD1 activation. It depends on Cu(2+) as a cofactor. Requires Zn(2+) as cofactor. In terms of processing, ubiquitinion by XIAP/BIRC4 leads to enhancement of its chaperone activity toward its physiologic target, SOD1, rather than proteasomal degradation. XIAP/BIRC4 preferentially ubiquitinates at Lys-241.

Its subcellular location is the cytoplasm. Its function is as follows. Delivers copper to copper zinc superoxide dismutase (SOD1). In Sus scrofa (Pig), this protein is Copper chaperone for superoxide dismutase.